The following is an 81-amino-acid chain: Photosystem I iron-sulfur center (81 aa).

2 4Fe-4S ferredoxin-type domains span residues 2–31 (AHSVKVYDTCIGCTQCVRACPCDVLEMVPR) and 39–68 (IASAPRTEDCIGCKRCETACPTDFLSVRVY). Positions 11, 14, 17, 21, 48, 51, 54, and 58 each coordinate [4Fe-4S] cluster.

As to quaternary structure, the eukaryotic PSI reaction center is composed of at least 11 subunits. [4Fe-4S] cluster serves as cofactor.

The protein localises to the plastid. Its subcellular location is the chloroplast thylakoid membrane. The catalysed reaction is reduced [plastocyanin] + hnu + oxidized [2Fe-2S]-[ferredoxin] = oxidized [plastocyanin] + reduced [2Fe-2S]-[ferredoxin]. Apoprotein for the two 4Fe-4S centers FA and FB of photosystem I (PSI); essential for photochemical activity. FB is the terminal electron acceptor of PSI, donating electrons to ferredoxin. The C-terminus interacts with PsaA/B/D and helps assemble the protein into the PSI complex. Required for binding of PsaD and PsaE to PSI. PSI is a plastocyanin/cytochrome c6-ferredoxin oxidoreductase, converting photonic excitation into a charge separation, which transfers an electron from the donor P700 chlorophyll pair to the spectroscopically characterized acceptors A0, A1, FX, FA and FB in turn. The chain is Photosystem I iron-sulfur center from Antithamnion sp. (Red alga).